Here is a 257-residue protein sequence, read N- to C-terminus: Large ribosomal subunit protein uL3 (257 aa).

The disordered stretch occupies residues Leu-232 to Lys-257.

It belongs to the universal ribosomal protein uL3 family. Part of the 50S ribosomal subunit. Forms a cluster with proteins L14 and L19.

Its function is as follows. One of the primary rRNA binding proteins, it binds directly near the 3'-end of the 23S rRNA, where it nucleates assembly of the 50S subunit. The chain is Large ribosomal subunit protein uL3 from Mycoplasma genitalium (strain ATCC 33530 / DSM 19775 / NCTC 10195 / G37) (Mycoplasmoides genitalium).